Consider the following 254-residue polypeptide: Triosephosphate isomerase, cytosolic (254 aa).

Substrate is bound by residues Asn10 and Lys12. Catalysis depends on His96, which acts as the Electrophile. The Proton acceptor role is filled by Glu166.

The protein belongs to the triosephosphate isomerase family. In terms of assembly, homodimer.

It is found in the cytoplasm. It catalyses the reaction D-glyceraldehyde 3-phosphate = dihydroxyacetone phosphate. It functions in the pathway carbohydrate biosynthesis; gluconeogenesis. The protein operates within carbohydrate degradation; glycolysis; D-glyceraldehyde 3-phosphate from glycerone phosphate: step 1/1. The protein is Triosephosphate isomerase, cytosolic (TPIP1) of Petunia hybrida (Petunia).